We begin with the raw amino-acid sequence, 852 residues long: Cytochrome P450 monooxygenase mpaDE (852 aa).

Over 1 to 6 (MDYLII) the chain is Lumenal. The helical transmembrane segment at 7–29 (IRITAVAVVLYLTRYVCCLYLHL) threads the bilayer. Over 30-852 (QDVPGPLFAK…DLEDAMEGTK (823 aa)) the chain is Cytoplasmic. Cysteine 448 lines the heme pocket.

It belongs to the cytochrome P450 family. Requires heme as cofactor.

The protein resides in the endoplasmic reticulum membrane. It catalyses the reaction 5-methylorsellinate + reduced [NADPH--hemoprotein reductase] + O2 = 4,6-dihydroxy-2-(hydroxymethyl)-3-methylbenzoate + oxidized [NADPH--hemoprotein reductase] + H2O + H(+). It carries out the reaction 4,6-dihydroxy-2-(hydroxymethyl)-3-methylbenzoate + H(+) = 5,7-dihydroxy-4-methylphthalide + H2O. Its pathway is secondary metabolite biosynthesis; terpenoid biosynthesis. In terms of biological role, cytochrome P450 monooxygenase; part of the gene cluster that mediates the biosynthesis of mycophenolic acid (MPA), the first isolated antibiotic natural product in the world obtained from a culture of Penicillium brevicompactum in 1893. MpaDE is an endoplasmic reticulum-bound enzyme that catalyzes the conversion of 5-methylorsellinic acid (5MOA) into the phthalide compound 5,7-dihydroxy-4,6-dimethylphthalide (DHMP). MpaDE first catalyzes hydroxylation of 5-MOA to 4,6-dihydroxy-2-(hydroxymethyl)-3-methylbenzoic acid (DHMB), and then acts as a lactone synthase that catalyzes the ring closure to convert DHMB into DHMP. The first step of the pathway is the synthesis of 5-methylorsellinic acid (5MOA) by the cytosolic polyketide synthase mpaC. 5MOA is then converted to the phthalide compound 5,7-dihydroxy-4,6-dimethylphthalide (DHMP) by the endoplasmic reticulum-bound cytochrome P450 monooxygenase mpaDE. MpaDE first catalyzes hydroxylation of 5-MOA to 4,6-dihydroxy-2-(hydroxymethyl)-3-methylbenzoic acid (DHMB). MpaDE then acts as a lactone synthase that catalyzes the ring closure to convert DHMB into DHMP. The next step is the prenylation of DHMP by the Golgi apparatus-associated prenyltransferase mpaA to yield farnesyl-DHMP (FDHMP). The ER-bound oxygenase mpaB then mediates the oxidative cleavage the C19-C20 double bond in FDHMP to yield FDHMP-3C via a mycophenolic aldehyde intermediate. The O-methyltransferase mpaG catalyzes the methylation of FDHMP-3C to yield MFDHMP-3C. After the cytosolic methylation of FDHMP-3C, MFDHMP-3C enters into peroxisomes probably via free diffusion due to its low molecular weight. Upon a peroxisomal CoA ligation reaction, catalyzed by a beta-oxidation component enzyme acyl-CoA ligase ACL891, MFDHMP-3C-CoA would then be restricted to peroxisomes for the following beta-oxidation pathway steps. The peroxisomal beta-oxidation machinery than converts MFDHMP-3C-CoA into MPA_CoA, via a beta-oxidation chain-shortening process. Finally mpaH acts as a peroxisomal acyl-CoA hydrolase with high substrate specificity toward MPA-CoA to release the final product MPA. The sequence is that of Cytochrome P450 monooxygenase mpaDE from Penicillium roqueforti (strain FM164).